A 1180-amino-acid chain; its full sequence is Protocadherin-12 (1180 aa).

The first 17 residues, 1-17 (MMLLLPFLLGLLGPGSY), serve as a signal peptide directing secretion. At 18–716 (LFISGDCQEV…HEPGVLSTPA (699 aa)) the chain is on the extracellular side. 5 consecutive Cadherin domains span residues 28 to 135 (ATVM…QPQF), 136 to 244 (PKDE…SPVF), 245 to 352 (AESS…APSI), 355 to 460 (TWAS…APVF), and 461 to 565 (EKSR…APEV). 2 N-linked (GlcNAc...) asparagine glycosylation sites follow: asparagine 265 and asparagine 415. 3 N-linked (GlcNAc...) asparagine glycosylation sites follow: asparagine 582, asparagine 659, and asparagine 662. Residues 600 to 711 (PAGTGIPPKA…LRDSAHEPGV (112 aa)) form the Cadherin 6 domain. The chain crosses the membrane as a helical span at residues 717–737 (LALICLAVLLAIFGLLLALFV). The Cytoplasmic segment spans residues 738-1180 (SICRTERKDN…ESRLGCGRNL (443 aa)). Disordered stretches follow at residues 857–930 (NASR…GPHQ) and 973–1026 (QFQP…PEED). A Phosphoserine modification is found at serine 859. Residues 904–918 (PASSATLRRQRNFNG) are compositionally biased toward polar residues. Residues 1014-1026 (PDLEEGPPSPEED) show a composition bias toward acidic residues. Serine 1064 is modified (phosphoserine). The span at 1076–1093 (SSPDATTSEEPRTFQTFG) shows a compositional bias: polar residues. Disordered regions lie at residues 1076–1104 (SSPD…ELSP) and 1156–1180 (SGAS…GRNL).

Post-translationally, N-glycosylated. Cleaved by ADAM10 close to the transmembrane domain to release the Protocadherin-12, secreted form in the serum. Cleavage results in reduced cellular adhesion in a cell migration assay. As to expression, expressed in endothelial cells: localizes in vasculogenic rather than angiogenic endothelium. Strongly expressed in a subset of invasive cells of the placenta, named glycogen-rich trophoblasts cells (at protein level). glycogen-rich trophoblasts cells originate from the from the ectoplacental cone where they rapidly form tight islets (at protein level). In adult mice, present at high level in mesangial cells of kidney glomeruli, while expression was not detected in other types of perivascular cells.

It is found in the cell membrane. It localises to the cell junction. The protein localises to the secreted. In terms of biological role, cellular adhesion molecule that may play an important role in cell-cell interactions at interendothelial junctions. Acts as a regulator of cell migration, probably via increasing cell-cell adhesion. Promotes homotypic calcium-dependent aggregation and adhesion and clusters at intercellular junctions. Unable to bind to catenins, weakly associates with the cytoskeleton. The chain is Protocadherin-12 from Mus musculus (Mouse).